A 443-amino-acid polypeptide reads, in one-letter code: Xaa-Pro dipeptidase (443 aa).

Aspartate 246, aspartate 257, histidine 339, glutamate 384, and glutamate 423 together coordinate Mn(2+).

This sequence belongs to the peptidase M24B family. Bacterial-type prolidase subfamily. Mn(2+) is required as a cofactor.

The catalysed reaction is Xaa-L-Pro dipeptide + H2O = an L-alpha-amino acid + L-proline. Splits dipeptides with a prolyl residue in the C-terminal position. The polypeptide is Xaa-Pro dipeptidase (Shigella boydii serotype 18 (strain CDC 3083-94 / BS512)).